Reading from the N-terminus, the 164-residue chain is uncharacterized protein (164 aa).

A helical membrane pass occupies residues 46-66 (FIRPNIYLIIFIIIVLLLLYY). A coiled-coil region spans residues 72-137 (KADKEKEKLE…YNLNKENLRE (66 aa)). A compositionally biased stretch (basic and acidic residues) spans 76 to 91 (EKEKLEDTDKEFDKST). The interval 76 to 114 (EKEKLEDTDKEFDKSTNNDTNSKKIYHRQKNSKTLNSSK) is disordered.

Its subcellular location is the membrane. This is an uncharacterized protein from Acanthamoeba polyphaga mimivirus (APMV).